The chain runs to 504 residues: Maturase K (504 aa).

Belongs to the intron maturase 2 family. MatK subfamily.

The protein localises to the plastid. It localises to the chloroplast. Usually encoded in the trnK tRNA gene intron. Probably assists in splicing its own and other chloroplast group II introns. The polypeptide is Maturase K (Gossypium gossypioides (Mexican cotton)).